We begin with the raw amino-acid sequence, 366 residues long: MAICIPVNLPDRSYNILIEKGSLANLGGEMSQLSLGKKVLLVSNPEIFDYYGQIAVNSLEKAGFAVFTHLIPAGENYKTLDAIAQVYDSALAHRLERSSTMVALGGGVIGDMTGFAAATWLRGVNFVQVPTTLLAMVDASIGGKTGVNHPQGKNLIGAFYQPKLVLIDPDVLKTLPVREFRAGMAEVIKYGVIWDAELFQQLEDSDNLASFSQIDGELLQTIITKSCQAKADVVSKDEKEAGLRAILNYGHTIAHGIESLTGYTSVNHGEAVALGMVAAGAIAVKLGMWTAGENQRQTDLIEKAALETRMPPLNADEMVNALTADKKVKDGQVRFILPTAIGQVTISDRVTPTLVREVLSPTESGQ.

Residues 107-111, 131-132, lysine 144, and lysine 153 contribute to the NAD(+) site; these read GVIGD and TT. The Zn(2+) site is built by glutamate 186, histidine 251, and histidine 268.

It belongs to the sugar phosphate cyclases superfamily. Dehydroquinate synthase family. It depends on Co(2+) as a cofactor. Zn(2+) serves as cofactor. The cofactor is NAD(+).

Its subcellular location is the cytoplasm. The enzyme catalyses 7-phospho-2-dehydro-3-deoxy-D-arabino-heptonate = 3-dehydroquinate + phosphate. It participates in metabolic intermediate biosynthesis; chorismate biosynthesis; chorismate from D-erythrose 4-phosphate and phosphoenolpyruvate: step 2/7. Its function is as follows. Catalyzes the conversion of 3-deoxy-D-arabino-heptulosonate 7-phosphate (DAHP) to dehydroquinate (DHQ). This chain is 3-dehydroquinate synthase, found in Microcystis aeruginosa (strain NIES-843 / IAM M-2473).